Reading from the N-terminus, the 746-residue chain is EF-hand domain-containing family member C2 (746 aa).

DM10 domains lie at 75–182 (DKQV…RKMG), 226–367 (DGHV…RTKY), and 429–536 (ESNT…EKHA). Residues 557-592 (PRSREIRQVFAAADPQHTKVIEYDPFRNLIVSITDG) enclose the EF-hand domain.

The protein localises to the cytoplasm. It is found in the cytoskeleton. Its subcellular location is the cilium axoneme. Functionally, microtubule inner protein (MIP) part of the dynein-decorated doublet microtubules (DMTs) in cilia axoneme, which is required for motile cilia beating. This Gallus gallus (Chicken) protein is EF-hand domain-containing family member C2 (EFHC2).